The sequence spans 423 residues: Serine--tRNA ligase (423 aa).

L-serine is bound at residue 229–231; it reads TAE. 260 to 262 contacts ATP; the sequence is RRE. E283 serves as a coordination point for L-serine. An ATP-binding site is contributed by 347–350; the sequence is EISS. An L-serine-binding site is contributed by S383.

It belongs to the class-II aminoacyl-tRNA synthetase family. Type-1 seryl-tRNA synthetase subfamily. As to quaternary structure, homodimer. The tRNA molecule binds across the dimer.

The protein localises to the cytoplasm. The enzyme catalyses tRNA(Ser) + L-serine + ATP = L-seryl-tRNA(Ser) + AMP + diphosphate + H(+). It carries out the reaction tRNA(Sec) + L-serine + ATP = L-seryl-tRNA(Sec) + AMP + diphosphate + H(+). It participates in aminoacyl-tRNA biosynthesis; selenocysteinyl-tRNA(Sec) biosynthesis; L-seryl-tRNA(Sec) from L-serine and tRNA(Sec): step 1/1. In terms of biological role, catalyzes the attachment of serine to tRNA(Ser). Is also able to aminoacylate tRNA(Sec) with serine, to form the misacylated tRNA L-seryl-tRNA(Sec), which will be further converted into selenocysteinyl-tRNA(Sec). The chain is Serine--tRNA ligase from Trichlorobacter lovleyi (strain ATCC BAA-1151 / DSM 17278 / SZ) (Geobacter lovleyi).